The sequence spans 236 residues: Outer membrane protein P.III (236 aa).

Positions 1–22 (MTKQLKLSALFVALLASGTAVA) are cleaved as a signal peptide. A run of 4 repeats spans residues 69 to 70 (VP), 71 to 72 (EP), 73 to 74 (EP), and 75 to 76 (AP). The 4 X 2 AA tandem repeats of X-P stretch occupies residues 69–76 (VPEPEPAP). The OmpA-like domain maps to 86 to 223 (YVDETISLSA…RVDVKIRSIV (138 aa)). Cysteine 185 and cysteine 208 are oxidised to a cystine.

The protein belongs to the outer membrane OOP (TC 1.B.6) superfamily.

The protein resides in the cell outer membrane. This Neisseria gonorrhoeae protein is Outer membrane protein P.III.